Here is a 940-residue protein sequence, read N- to C-terminus: BTB/POZ domain-containing protein FBL11 (940 aa).

One can recognise a BTB domain in the interval 41-109 (WDMSEILSYG…LYGYDIEITS (69 aa)). A BACK domain is found at 155-258 (IQIWSFGLEH…FSLLPLWFIA (104 aa)).

Its pathway is protein modification; protein ubiquitination. Functionally, may act as a substrate-specific adapter of an E3 ubiquitin-protein ligase complex (CUL3-RBX1-BTB) which mediates the ubiquitination and subsequent proteasomal degradation of target proteins. The polypeptide is BTB/POZ domain-containing protein FBL11 (FBL11) (Arabidopsis thaliana (Mouse-ear cress)).